A 157-amino-acid polypeptide reads, in one-letter code: Methylglyoxal synthase (157 aa).

The MGS-like domain maps to 1-157 (MSKVKNIAVV…DFSSYTQRKL (157 aa)). Substrate-binding positions include H12, K16, 38-41 (TGTT), and 71-72 (SG). The active-site Proton donor/acceptor is the D77. A substrate-binding site is contributed by H104.

Belongs to the methylglyoxal synthase family.

The catalysed reaction is dihydroxyacetone phosphate = methylglyoxal + phosphate. Its function is as follows. Catalyzes the formation of methylglyoxal from dihydroxyacetone phosphate. This is Methylglyoxal synthase from Maridesulfovibrio salexigens (strain ATCC 14822 / DSM 2638 / NCIMB 8403 / VKM B-1763) (Desulfovibrio salexigens).